We begin with the raw amino-acid sequence, 370 residues long: 3-dehydroquinate synthase (370 aa).

NAD(+) is bound by residues 112–116 (GVVGD), 136–137 (TS), Lys-149, Lys-158, and 176–179 (TLRT). Zn(2+)-binding residues include Glu-191, His-254, and His-276.

This sequence belongs to the sugar phosphate cyclases superfamily. Dehydroquinate synthase family. Requires Co(2+) as cofactor. Zn(2+) serves as cofactor. NAD(+) is required as a cofactor.

Its subcellular location is the cytoplasm. It catalyses the reaction 7-phospho-2-dehydro-3-deoxy-D-arabino-heptonate = 3-dehydroquinate + phosphate. The protein operates within metabolic intermediate biosynthesis; chorismate biosynthesis; chorismate from D-erythrose 4-phosphate and phosphoenolpyruvate: step 2/7. Its function is as follows. Catalyzes the conversion of 3-deoxy-D-arabino-heptulosonate 7-phosphate (DAHP) to dehydroquinate (DHQ). In Xanthomonas oryzae pv. oryzae (strain MAFF 311018), this protein is 3-dehydroquinate synthase.